Here is a 144-residue protein sequence, read N- to C-terminus: NADH-ubiquinone oxidoreductase chain 6 (144 aa).

Helical transmembrane passes span 1–21, 25–45, 46–66, 79–99, and 108–128; these read MVKV…INID, SSFF…MSMH, IWFS…ILVY, YMAV…VLTY, and FYYS…LFFM.

Belongs to the complex I subunit 6 family.

It is found in the mitochondrion membrane. It carries out the reaction a ubiquinone + NADH + 5 H(+)(in) = a ubiquinol + NAD(+) + 4 H(+)(out). Functionally, core subunit of the mitochondrial membrane respiratory chain NADH dehydrogenase (Complex I) that is believed to belong to the minimal assembly required for catalysis. Complex I functions in the transfer of electrons from NADH to the respiratory chain. The immediate electron acceptor for the enzyme is believed to be ubiquinone. The protein is NADH-ubiquinone oxidoreductase chain 6 of Caenorhabditis elegans.